A 916-amino-acid chain; its full sequence is Oxoglutarate dehydrogenase (916 aa).

Belongs to the alpha-ketoglutarate dehydrogenase family. Homodimer. Part of the 2-oxoglutarate dehydrogenase (OGDH) complex composed of E1 (2-oxoglutarate dehydrogenase), E2 (dihydrolipoamide succinyltransferase) and E3 (dihydrolipoamide dehydrogenase); the complex contains multiple copies of the three enzymatic components (E1, E2 and E3). It depends on thiamine diphosphate as a cofactor.

It carries out the reaction N(6)-[(R)-lipoyl]-L-lysyl-[protein] + 2-oxoglutarate + H(+) = N(6)-[(R)-S(8)-succinyldihydrolipoyl]-L-lysyl-[protein] + CO2. In terms of biological role, E1 component of the 2-oxoglutarate dehydrogenase (OGDH) complex which catalyzes the decarboxylation of 2-oxoglutarate, the first step in the conversion of 2-oxoglutarate to succinyl-CoA and CO(2). This Buchnera aphidicola subsp. Baizongia pistaciae (strain Bp) protein is Oxoglutarate dehydrogenase (sucA).